A 620-amino-acid polypeptide reads, in one-letter code: Glutathione-regulated potassium-efflux system protein KefC (620 aa).

12 helical membrane-spanning segments follow: residues 4-24, 26-46, 54-74, 90-110, 114-134, 149-169, 178-198, 218-238, 270-290, 294-314, 327-347, and 359-379; these read HTLL…PIAV, LGLG…PWGL, SILH…GLEL, GALQ…FLGL, VAEL…MQAM, FAVL…IPLL, LGAF…VVVL, VFSA…EEVG, GLLL…GTLV, LRIL…LWLV, WFAV…GAAQ, and ALTL…VLLT. Residues 399–518 form the RCK N-terminal domain; it reads QPRVIVAGFG…AGVAMPERET (120 aa). Residues 599–620 form a disordered region; it reads QGTAEGKHSGEVADEPEVKPSI.

It belongs to the monovalent cation:proton antiporter 2 (CPA2) transporter (TC 2.A.37) family. KefC subfamily. In terms of assembly, homodimer. Interacts with the regulatory subunit KefF.

The protein resides in the cell inner membrane. Its function is as follows. Pore-forming subunit of a potassium efflux system that confers protection against electrophiles. Catalyzes K(+)/H(+) antiport. The chain is Glutathione-regulated potassium-efflux system protein KefC from Salmonella paratyphi B (strain ATCC BAA-1250 / SPB7).